The following is a 294-amino-acid chain: tRNA dimethylallyltransferase (294 aa).

10-17 contributes to the ATP binding site; it reads GPTAVGKT. 12-17 contacts substrate; that stretch reads TAVGKT. The interval 35 to 38 is interaction with substrate tRNA; the sequence is DSQQ.

The protein belongs to the IPP transferase family. Monomer. Requires Mg(2+) as cofactor.

It catalyses the reaction adenosine(37) in tRNA + dimethylallyl diphosphate = N(6)-dimethylallyladenosine(37) in tRNA + diphosphate. Its function is as follows. Catalyzes the transfer of a dimethylallyl group onto the adenine at position 37 in tRNAs that read codons beginning with uridine, leading to the formation of N6-(dimethylallyl)adenosine (i(6)A). The protein is tRNA dimethylallyltransferase of Streptococcus sanguinis (strain SK36).